The chain runs to 65 residues: MAKSNKANDLIKVTLVRSTIGRIKAHRASVAGLGLRRLNQTVEVQDTPANRGMINAVSYLLKVEA.

This sequence belongs to the universal ribosomal protein uL30 family. Part of the 50S ribosomal subunit.

The sequence is that of Large ribosomal subunit protein uL30 from Methylobacillus flagellatus (strain ATCC 51484 / DSM 6875 / VKM B-1610 / KT).